The following is a 405-amino-acid chain: Argininosuccinate synthase (405 aa).

9-17 (AYSGGLDTS) provides a ligand contact to ATP. L-citrulline contacts are provided by Tyr-87 and Ser-92. ATP is bound at residue Gly-117. Thr-119, Asn-123, and Asp-124 together coordinate L-aspartate. An L-citrulline-binding site is contributed by Asn-123. L-citrulline is bound by residues Arg-127, Ser-176, Ser-185, Glu-262, and Tyr-274.

This sequence belongs to the argininosuccinate synthase family. Type 1 subfamily. Homotetramer.

It localises to the cytoplasm. It catalyses the reaction L-citrulline + L-aspartate + ATP = 2-(N(omega)-L-arginino)succinate + AMP + diphosphate + H(+). It participates in amino-acid biosynthesis; L-arginine biosynthesis; L-arginine from L-ornithine and carbamoyl phosphate: step 2/3. The chain is Argininosuccinate synthase from Caldicellulosiruptor saccharolyticus (strain ATCC 43494 / DSM 8903 / Tp8T 6331).